We begin with the raw amino-acid sequence, 511 residues long: UPF0288 protein MK0796 (511 aa).

It belongs to the UPF0288 family.

This is UPF0288 protein MK0796 from Methanopyrus kandleri (strain AV19 / DSM 6324 / JCM 9639 / NBRC 100938).